The chain runs to 601 residues: Elongation factor 4 (601 aa).

A tr-type G domain is found at 7 to 189; sequence KNIRNFSIVA…AIVTRLPPPM (183 aa). Residues 19 to 24 and 136 to 139 contribute to the GTP site; these read DHGKST and NKVD.

The protein belongs to the TRAFAC class translation factor GTPase superfamily. Classic translation factor GTPase family. LepA subfamily.

The protein localises to the cell inner membrane. It catalyses the reaction GTP + H2O = GDP + phosphate + H(+). Required for accurate and efficient protein synthesis under certain stress conditions. May act as a fidelity factor of the translation reaction, by catalyzing a one-codon backward translocation of tRNAs on improperly translocated ribosomes. Back-translocation proceeds from a post-translocation (POST) complex to a pre-translocation (PRE) complex, thus giving elongation factor G a second chance to translocate the tRNAs correctly. Binds to ribosomes in a GTP-dependent manner. In Xanthobacter autotrophicus (strain ATCC BAA-1158 / Py2), this protein is Elongation factor 4.